The sequence spans 413 residues: Endoplasmic reticulum resident protein 44.2 (413 aa).

Residues 1 to 21 (MNLASVLLLLAACHLSVSVNG) form the signal peptide. A Thioredoxin domain is found at 22 to 136 (QEHKEAIELS…LTNFVKFQLS (115 aa)). Cys184 and Cys233 are disulfide-bonded. Asn264 is a glycosylation site (N-linked (GlcNAc...) asparagine). A disordered region spans residues 367-413 (KAARGITDDHEAQAPSTRPIDTTPPPSVFKELKPSDKRYSILQKSEL). A compositionally biased stretch (basic and acidic residues) spans 396–413 (KELKPSDKRYSILQKSEL). The Prevents secretion from ER signature appears at 410 to 413 (KSEL).

The protein resides in the endoplasmic reticulum lumen. The sequence is that of Endoplasmic reticulum resident protein 44.2 from Caenorhabditis elegans.